A 424-amino-acid polypeptide reads, in one-letter code: Myb family transcription factor RLI1 (424 aa).

Residues 144-165 form a disordered region; the sequence is RPQKRDSGERTPLPPPSQQQHQ. The 61-residue stretch at 238 to 298 folds into the HTH myb-type domain; the sequence is APSKTRIRWT…HLQKYRIAKY (61 aa). The H-T-H motif DNA-binding region spans 269–294; sequence PKGILKLMNSDGLTIYHIKSHLQKYR. The LHEQLE signature appears at 342–347; sequence LHEQLE. Residues 342–391 adopt a coiled-coil conformation; it reads LHEQLEIQRNLQLRIEEQGKRLQKMFEDQLKASRSVMEPQELDDVVAFAA.

It belongs to the MYB-CC family. In terms of assembly, homodimer. Interacts with PHR2 in the nucleus. Interacts with SPX1 and SPX2 in the nucleus; these interactions prevent binding to the promoters of target genes, thus regulating negatively leaf inclination in response to phosphate (Pi) starvation.

It is found in the nucleus. Transcription factor binding to specific DNA sequences of target genes promoters, such as the motif R1BS 5'-NAKATNCN-3' and the motif P1BS 5'-GNATATNC-3' to trigger their expression. Nitrate-induced component involved in modulating phosphate (Pi) response and homeostasis together with PHR2; activates directly the expression of Pi starvation-induced (PSI) genes upon nitrate disponibility, thus triggering the nitrate-induced phosphate response (NIPR) promoting Pi uptake activity. Involved in the shoot architecture; positively regulates leaf inclination by affecting lamina joint cell elongation via the direct promotion of ILI4/BU1 and BC1 genes expression, especially in response to phosphate (Pi) availability. Regulates both brassinolide (BL) biosynthesis and signaling by directly activating BL-biosynthesis and signaling genes. The sequence is that of Myb family transcription factor RLI1 from Oryza sativa subsp. indica (Rice).